The primary structure comprises 363 residues: MKVKVLSLLVPALLVAGAANAAEIYNKDGNKLDLYGKVDGLHYFSDDDSQDGDQTYMRLGFKGETQVNDQLTGYGQWEYQIQGNSGENENNSWTRVAFAGLKFGDAGSFDYGRNYGVVYDVTSWTDVLPEFGGDTYGSDNFMQQRGNGFATYRNSDFFGLVDGLNFAVQYQGKNGSASGEDQTNNGRTELRQNGDGVGGSITYNLGEGFGIGTAVSSSKRTSSQNDLTYGNGDRAETYTGGLKYDANNIYLAAQYTQTYNATRVGNLGWANKAQNFEVVAQYQFDFGLRPSVAYLQSKGKDLENGYGDQDLLKYVDVGATYYFNKNMSTYVDYKINLLDDKEFTRNAGISTDDIVALGLVYQF.

An N-terminal signal peptide occupies residues 1–21 (MKVKVLSLLVPALLVAGAANA). Positions 174-187 (NGSASGEDQTNNGR) are enriched in polar residues. Residues 174-195 (NGSASGEDQTNNGRTELRQNGD) are disordered.

The protein belongs to the Gram-negative porin family. In terms of assembly, homotrimer. Probably forms mixed heterotrimers with OmpF; other mixed heterotrimers are also probable.

The protein resides in the cell outer membrane. Its function is as follows. Forms pores that allow passive diffusion of small molecules across the outer membrane. (Microbial infection) Binds CdiA-EC536, probably acts as the outer membrane receptor for toxin CdiA-EC536 with OmpF. In Enterobacter cloacae subsp. cloacae (strain ATCC 13047 / DSM 30054 / NBRC 13535 / NCTC 10005 / WDCM 00083 / NCDC 279-56), this protein is Outer membrane porin C (ompC).